A 353-amino-acid polypeptide reads, in one-letter code: Photosystem II protein D1 (353 aa).

Threonine 2 is subject to N-acetylthreonine. Phosphothreonine is present on threonine 2. Helical transmembrane passes span 29-46, 118-133, and 142-156; these read YIGW…TATS, HFLL…EWEL, and WIAV…AATA. A chlorophyll a-binding site is contributed by histidine 118. Tyrosine 126 contacts pheophytin a. [CaMn4O5] cluster-binding residues include aspartate 170 and glutamate 189. The helical transmembrane segment at 197-218 threads the bilayer; that stretch reads FHMLGVAGVFGGSLFSAMHGSL. Histidine 198 contributes to the chlorophyll a binding site. Residues histidine 215 and 264–265 each bind a quinone; that span reads SF. Histidine 215 contacts Fe cation. Position 272 (histidine 272) interacts with Fe cation. The helical transmembrane segment at 274 to 288 threads the bilayer; that stretch reads LLAAWPVVGIWFTAL. Residues histidine 332, glutamate 333, aspartate 342, and alanine 344 each contribute to the [CaMn4O5] cluster site. The propeptide occupies 345 to 353; sequence AVEAPSTNG.

It belongs to the reaction center PufL/M/PsbA/D family. In terms of assembly, PSII is composed of 1 copy each of membrane proteins PsbA, PsbB, PsbC, PsbD, PsbE, PsbF, PsbH, PsbI, PsbJ, PsbK, PsbL, PsbM, PsbT, PsbX, PsbY, PsbZ, Psb30/Ycf12, at least 3 peripheral proteins of the oxygen-evolving complex and a large number of cofactors. It forms dimeric complexes. The cofactor is The D1/D2 heterodimer binds P680, chlorophylls that are the primary electron donor of PSII, and subsequent electron acceptors. It shares a non-heme iron and each subunit binds pheophytin, quinone, additional chlorophylls, carotenoids and lipids. D1 provides most of the ligands for the Mn4-Ca-O5 cluster of the oxygen-evolving complex (OEC). There is also a Cl(-1) ion associated with D1 and D2, which is required for oxygen evolution. The PSII complex binds additional chlorophylls, carotenoids and specific lipids.. Post-translationally, tyr-161 forms a radical intermediate that is referred to as redox-active TyrZ, YZ or Y-Z. C-terminally processed by CTPA; processing is essential to allow assembly of the oxygen-evolving complex and thus photosynthetic growth.

It is found in the plastid. It localises to the chloroplast thylakoid membrane. It carries out the reaction 2 a plastoquinone + 4 hnu + 2 H2O = 2 a plastoquinol + O2. Its function is as follows. Photosystem II (PSII) is a light-driven water:plastoquinone oxidoreductase that uses light energy to abstract electrons from H(2)O, generating O(2) and a proton gradient subsequently used for ATP formation. It consists of a core antenna complex that captures photons, and an electron transfer chain that converts photonic excitation into a charge separation. The D1/D2 (PsbA/PsbD) reaction center heterodimer binds P680, the primary electron donor of PSII as well as several subsequent electron acceptors. In Dioscorea elephantipes (Elephant's foot yam), this protein is Photosystem II protein D1.